The sequence spans 221 residues: Enolase-phosphatase E1 (221 aa).

Positions 9 and 11 each coordinate Mg(2+). Substrate contacts are provided by residues 116–117 (SS) and Lys152. Asp180 serves as a coordination point for Mg(2+).

Belongs to the HAD-like hydrolase superfamily. MasA/MtnC family. As to quaternary structure, monomer. Mg(2+) is required as a cofactor.

The protein localises to the cytoplasm. It is found in the nucleus. The enzyme catalyses 5-methylsulfanyl-2,3-dioxopentyl phosphate + H2O = 1,2-dihydroxy-5-(methylsulfanyl)pent-1-en-3-one + phosphate. Its pathway is amino-acid biosynthesis; L-methionine biosynthesis via salvage pathway; L-methionine from S-methyl-5-thio-alpha-D-ribose 1-phosphate: step 3/6. It functions in the pathway amino-acid biosynthesis; L-methionine biosynthesis via salvage pathway; L-methionine from S-methyl-5-thio-alpha-D-ribose 1-phosphate: step 4/6. Functionally, bifunctional enzyme that catalyzes the enolization of 2,3-diketo-5-methylthiopentyl-1-phosphate (DK-MTP-1-P) into the intermediate 2-hydroxy-3-keto-5-methylthiopentenyl-1-phosphate (HK-MTPenyl-1-P), which is then dephosphorylated to form the acireductone 1,2-dihydroxy-3-keto-5-methylthiopentene (DHK-MTPene). This Kluyveromyces lactis (strain ATCC 8585 / CBS 2359 / DSM 70799 / NBRC 1267 / NRRL Y-1140 / WM37) (Yeast) protein is Enolase-phosphatase E1.